Reading from the N-terminus, the 866-residue chain is Protein translocase subunit SecA (866 aa).

ATP is bound by residues Gln-87, 105-109 (GEGKT), and Asp-514. The disordered stretch occupies residues 819–858 (VSPIGTPSSEGGGETSGADTYSNKKIGRNDPCPCGSGKKY). Zn(2+)-binding residues include Cys-850, Cys-852, Cys-861, and Cys-862.

The protein belongs to the SecA family. Monomer and homodimer. Part of the essential Sec protein translocation apparatus which comprises SecA, SecYEG and auxiliary proteins SecDF. Other proteins may also be involved. Zn(2+) serves as cofactor.

It localises to the cell inner membrane. The protein localises to the cytoplasm. It carries out the reaction ATP + H2O + cellular proteinSide 1 = ADP + phosphate + cellular proteinSide 2.. Its function is as follows. Part of the Sec protein translocase complex. Interacts with the SecYEG preprotein conducting channel. Has a central role in coupling the hydrolysis of ATP to the transfer of proteins into and across the cell membrane, serving as an ATP-driven molecular motor driving the stepwise translocation of polypeptide chains across the membrane. This chain is Protein translocase subunit SecA, found in Elusimicrobium minutum (strain Pei191).